Here is a 211-residue protein sequence, read N- to C-terminus: MRNRIIVSACAALAMFAIQAPAHAAATDQLQSFVTGVKSARGEFTQRQVKGQGANGKVTGTSSGTFVFSRPGKFTWRYTKPYDQLLQADGQTLYIYDKDLNQVTERKLDGALGSSPAAILFGSNDLEKNFVVKNGPTRDGVEWLELTPKAKDTQFERIGIGFKAGNLEAMELRDAFGNTTLLTFTGMQKNPPLAADAFRFTVPKGADVMKQ.

An N-terminal signal peptide occupies residues Met-1–Ala-24.

This sequence belongs to the LolA family. Monomer.

The protein localises to the periplasm. Its function is as follows. Participates in the translocation of lipoproteins from the inner membrane to the outer membrane. Only forms a complex with a lipoprotein if the residue after the N-terminal Cys is not an aspartate (The Asp acts as a targeting signal to indicate that the lipoprotein should stay in the inner membrane). The sequence is that of Outer-membrane lipoprotein carrier protein from Cupriavidus necator (strain ATCC 17699 / DSM 428 / KCTC 22496 / NCIMB 10442 / H16 / Stanier 337) (Ralstonia eutropha).